Consider the following 695-residue polypeptide: DNA ligase (695 aa).

NAD(+) contacts are provided by residues Asp-39–Asp-43, Ser-88–Leu-89, and Glu-124. Residue Lys-126 is the N6-AMP-lysine intermediate of the active site. The NAD(+) site is built by Arg-147, Glu-183, Lys-299, and Lys-323. Zn(2+) contacts are provided by Cys-419, Cys-422, Cys-437, and Cys-443. Positions Pro-612–Pro-695 constitute a BRCT domain.

This sequence belongs to the NAD-dependent DNA ligase family. LigA subfamily. Requires Mg(2+) as cofactor. Mn(2+) serves as cofactor.

It catalyses the reaction NAD(+) + (deoxyribonucleotide)n-3'-hydroxyl + 5'-phospho-(deoxyribonucleotide)m = (deoxyribonucleotide)n+m + AMP + beta-nicotinamide D-nucleotide.. DNA ligase that catalyzes the formation of phosphodiester linkages between 5'-phosphoryl and 3'-hydroxyl groups in double-stranded DNA using NAD as a coenzyme and as the energy source for the reaction. It is essential for DNA replication and repair of damaged DNA. The chain is DNA ligase from Gluconacetobacter diazotrophicus (strain ATCC 49037 / DSM 5601 / CCUG 37298 / CIP 103539 / LMG 7603 / PAl5).